The sequence spans 387 residues: Eukaryotic translation initiation factor 3 subunit M (387 aa).

The PCI domain occupies 181–340; that stretch reads LSSKVMIELL…RKVHISSTMH (160 aa).

This sequence belongs to the eIF-3 subunit M family. In terms of assembly, component of the eukaryotic translation initiation factor 3 (eIF-3) complex. The eIF-3 complex interacts with pix.

It localises to the cytoplasm. The protein localises to the golgi apparatus. Component of the eukaryotic translation initiation factor 3 (eIF-3) complex, which is involved in protein synthesis of a specialized repertoire of mRNAs and, together with other initiation factors, stimulates binding of mRNA and methionyl-tRNAi to the 40S ribosome. The eIF-3 complex specifically targets and initiates translation of a subset of mRNAs involved in cell proliferation. This Drosophila persimilis (Fruit fly) protein is Eukaryotic translation initiation factor 3 subunit M.